Reading from the N-terminus, the 74-residue chain is Protein WFDC9 (74 aa).

An N-terminal signal peptide occupies residues Met1–Leu19.

It localises to the secreted. This Rattus norvegicus (Rat) protein is Protein WFDC9 (Wfdc9).